A 210-amino-acid chain; its full sequence is Cell wall protein SRL1 (210 aa).

The signal sequence occupies residues methionine 1–alanine 19. The N-linked (GlcNAc...) asparagine glycan is linked to asparagine 23. Disordered regions lie at residues serine 80–threonine 99 and leucine 118–phenylalanine 142. A compositionally biased stretch (low complexity) spans leucine 118–valine 127. Residues serine 132–serine 141 are compositionally biased toward basic and acidic residues. Residues asparagine 174, asparagine 200, and asparagine 206 are each glycosylated (N-linked (GlcNAc...) asparagine).

The protein resides in the secreted. It is found in the cell wall. Its subcellular location is the cell surface. Required to stabilize the cell wall in the absence of multiple GPI-anchored mannoproteins. In Saccharomyces cerevisiae (strain ATCC 204508 / S288c) (Baker's yeast), this protein is Cell wall protein SRL1 (SRL1).